A 103-amino-acid polypeptide reads, in one-letter code: Small ribosomal subunit protein uS10 (103 aa).

This sequence belongs to the universal ribosomal protein uS10 family. In terms of assembly, part of the 30S ribosomal subunit.

Involved in the binding of tRNA to the ribosomes. The sequence is that of Small ribosomal subunit protein uS10 from Natranaerobius thermophilus (strain ATCC BAA-1301 / DSM 18059 / JW/NM-WN-LF).